The primary structure comprises 77 residues: Liver-expressed antimicrobial peptide 2 (77 aa).

The N-terminal stretch at 1 to 22 (MWHLKLFAVLMICLLLLAQVDG) is a signal peptide. A propeptide spanning residues 23-37 (SPIPQQSSAKRRPRR) is cleaved from the precursor. Cystine bridges form between Cys54-Cys65 and Cys60-Cys70.

Belongs to the LEAP2 family.

The protein resides in the secreted. Has an antimicrobial activity. The chain is Liver-expressed antimicrobial peptide 2 (LEAP2) from Bos taurus (Bovine).